Reading from the N-terminus, the 360-residue chain is Protein RecA (360 aa).

66-73 (GPESSGKT) contacts ATP. The interval 330–360 (DAKAIEERENPEKVKQDKEVPVNKDASDEKK) is disordered.

The protein belongs to the RecA family.

It localises to the cytoplasm. In terms of biological role, can catalyze the hydrolysis of ATP in the presence of single-stranded DNA, the ATP-dependent uptake of single-stranded DNA by duplex DNA, and the ATP-dependent hybridization of homologous single-stranded DNAs. It interacts with LexA causing its activation and leading to its autocatalytic cleavage. This Lactobacillus johnsonii (strain CNCM I-12250 / La1 / NCC 533) protein is Protein RecA.